We begin with the raw amino-acid sequence, 320 residues long: GTP 3',8-cyclase (320 aa).

Residues 4 to 227 form the Radical SAM core domain; that stretch reads LYSRRINYMR…METEKSSPAK (224 aa). R13 is a GTP binding site. 2 residues coordinate [4Fe-4S] cluster: C20 and C24. Y26 is a binding site for S-adenosyl-L-methionine. Residue C27 coordinates [4Fe-4S] cluster. GTP is bound at residue R63. S-adenosyl-L-methionine is bound at residue G67. Residue T94 participates in GTP binding. An S-adenosyl-L-methionine-binding site is contributed by S118. K155 provides a ligand contact to GTP. M189 provides a ligand contact to S-adenosyl-L-methionine. [4Fe-4S] cluster-binding residues include C249 and C252. 254–256 provides a ligand contact to GTP; it reads RVR. C266 serves as a coordination point for [4Fe-4S] cluster. Residues 300 to 312 show a composition bias toward basic and acidic residues; that stretch reads KHDLLTDSHEESN. The segment at 300 to 320 is disordered; that stretch reads KHDLLTDSHEESNRGMSQIGG.

Belongs to the radical SAM superfamily. MoaA family. As to quaternary structure, monomer and homodimer. Requires [4Fe-4S] cluster as cofactor.

It catalyses the reaction GTP + AH2 + S-adenosyl-L-methionine = (8S)-3',8-cyclo-7,8-dihydroguanosine 5'-triphosphate + 5'-deoxyadenosine + L-methionine + A + H(+). It participates in cofactor biosynthesis; molybdopterin biosynthesis. In terms of biological role, catalyzes the cyclization of GTP to (8S)-3',8-cyclo-7,8-dihydroguanosine 5'-triphosphate. The protein is GTP 3',8-cyclase of Alkaliphilus oremlandii (strain OhILAs) (Clostridium oremlandii (strain OhILAs)).